A 319-amino-acid polypeptide reads, in one-letter code: Acyl-coenzyme A thioesterase 8 (319 aa).

The segment at 1 to 20 (MSSPQAPEDGQGCGDRGDPP) is disordered. Residues Asp232, Ser254, and Gln304 each act as charge relay system in the active site. The short motif at 317–319 (SKL) is the Microbody targeting signal element.

Belongs to the C/M/P thioester hydrolase family. Homodimer. As to quaternary structure, (Microbial infection) Interacts with human immunodeficiency virus (HIV-1) Nef (via middle region); this interaction enhances ACOT8 Acyl-CoA thioesterase activity and occurs in a Nef myristoylation-independent manner. According to a second report, the interaction with HIV-1 Nef occurs in a Nef myristoylation-independent manner but does not enhance ACOT8 Acyl-CoA thioesterase activity. Detected in a T-cell line (at protein level). Ubiquitous.

It localises to the peroxisome matrix. The enzyme catalyses choloyl-CoA + H2O = cholate + CoA + H(+). The catalysed reaction is chenodeoxycholoyl-CoA + H2O = chenodeoxycholate + CoA + H(+). It catalyses the reaction acetyl-CoA + H2O = acetate + CoA + H(+). It carries out the reaction butanoyl-CoA + H2O = butanoate + CoA + H(+). The enzyme catalyses 2-methylpropanoyl-CoA + H2O = 2-methylpropanoate + CoA + H(+). The catalysed reaction is hexanoyl-CoA + H2O = hexanoate + CoA + H(+). It catalyses the reaction octanoyl-CoA + H2O = octanoate + CoA + H(+). It carries out the reaction decanoyl-CoA + H2O = decanoate + CoA + H(+). The enzyme catalyses dodecanoyl-CoA + H2O = dodecanoate + CoA + H(+). The catalysed reaction is tetradecanoyl-CoA + H2O = tetradecanoate + CoA + H(+). It catalyses the reaction hexadecanoyl-CoA + H2O = hexadecanoate + CoA + H(+). It carries out the reaction octadecanoyl-CoA + H2O = octadecanoate + CoA + H(+). The enzyme catalyses malonyl-CoA + H2O = malonate + CoA + H(+). The catalysed reaction is acetoacetyl-CoA + H2O = acetoacetate + CoA + H(+). It catalyses the reaction propanoyl-CoA + H2O = propanoate + CoA + H(+). It carries out the reaction succinyl-CoA + H2O = succinate + CoA + H(+). The enzyme catalyses glutaryl-CoA + H2O = glutarate + CoA + H(+). The catalysed reaction is hexanedioyl-CoA + H2O = hexanedioate + CoA + H(+). It catalyses the reaction octanedioyl-CoA + H2O = octanedioate + CoA + H(+). It carries out the reaction decanedioyl-CoA + H2O = decanedioate + CoA + H(+). The enzyme catalyses dodecanedioyl-CoA + H2O = dodecanedioate + CoA + H(+). The catalysed reaction is (9Z)-tetradecenoyl-CoA + H2O = (9Z)-tetradecenoate + CoA + H(+). It catalyses the reaction (9Z)-hexadecenoyl-CoA + H2O = (9Z)-hexadecenoate + CoA + H(+). It carries out the reaction (9Z)-octadecenoyl-CoA + H2O = (9Z)-octadecenoate + CoA + H(+). The enzyme catalyses (9Z,12Z)-octadecadienoyl-CoA + H2O = (9Z,12Z)-octadecadienoate + CoA + H(+). The catalysed reaction is eicosanoyl-CoA + H2O = eicosanoate + CoA + H(+). It catalyses the reaction (5Z,8Z,11Z,14Z)-eicosatetraenoyl-CoA + H2O = (5Z,8Z,11Z,14Z)-eicosatetraenoate + CoA + H(+). It carries out the reaction 4,8-dimethylnonanoyl-CoA + H2O = 4,8-dimethylnonanoate + CoA + H(+). The enzyme catalyses 2,6-dimethylheptanoyl-CoA + H2O = 2,6-dimethylheptanoate + CoA + H(+). The catalysed reaction is (3S)-3-hydroxy-3-methylglutaryl-CoA + H2O = 3-hydroxy-3-methylglutarate + CoA + H(+). It catalyses the reaction 3alpha,7alpha,12alpha-trihydroxy-5beta-cholestan-26-oyl-CoA + H2O = 3alpha,7alpha,12alpha-trihydroxy-5beta-cholestan-26-oate + CoA + H(+). It carries out the reaction 2-methyloctadecanoyl-CoA + H2O = 2-methyloctadecanoate + CoA + H(+). The enzyme catalyses prostaglandin F2alpha-CoA + H2O = prostaglandin F2alpha + CoA + H(+). It participates in lipid metabolism; fatty acid metabolism. Its activity is regulated as follows. Inhibited by CoASH (IC(50)=10-15 uM). Also inhibited by cysteine-reactive agents. Its function is as follows. Catalyzes the hydrolysis of acyl-CoAs into free fatty acids and coenzyme A (CoASH), regulating their respective intracellular levels. Displays no strong substrate specificity with respect to the carboxylic acid moiety of Acyl-CoAs. Hydrolyzes medium length (C2 to C20) straight-chain, saturated and unsaturated acyl-CoAS but is inactive towards substrates with longer aliphatic chains. Moreover, it catalyzes the hydrolysis of CoA esters of bile acids, such as choloyl-CoA and chenodeoxycholoyl-CoA and competes with bile acid CoA:amino acid N-acyltransferase (BAAT). Is also able to hydrolyze CoA esters of dicarboxylic acids. It is involved in the metabolic regulation of peroxisome proliferation. (Microbial infection) May mediate Nef-induced down-regulation of CD4 cell-surface expression. The protein is Acyl-coenzyme A thioesterase 8 (ACOT8) of Homo sapiens (Human).